The primary structure comprises 64 residues: MPKMKSKSALKKRIKITGTGKIKRHQAFRSHLAQNKTTKQKRQSRNAELMHKSDYKRFKALIQK.

The protein belongs to the bacterial ribosomal protein bL35 family.

This Mycoplasmopsis pulmonis (strain UAB CTIP) (Mycoplasma pulmonis) protein is Large ribosomal subunit protein bL35.